Reading from the N-terminus, the 69-residue chain is DNA-directed RNA polymerase subunit epsilon (69 aa).

The protein belongs to the RNA polymerase subunit epsilon family. As to quaternary structure, RNAP is composed of a core of 2 alpha, a beta and a beta' subunit. The core is associated with a delta subunit, and at least one of epsilon or omega. When a sigma factor is associated with the core the holoenzyme is formed, which can initiate transcription.

It catalyses the reaction RNA(n) + a ribonucleoside 5'-triphosphate = RNA(n+1) + diphosphate. A non-essential component of RNA polymerase (RNAP). The protein is DNA-directed RNA polymerase subunit epsilon of Geobacillus sp. (strain WCH70).